The following is a 412-amino-acid chain: LL-diaminopimelate aminotransferase (412 aa).

Positions 15 and 42 each coordinate substrate. Residues Tyr-72, 108–109 (SK), Tyr-132, Asn-187, Tyr-218, and 246–248 (SFS) each bind pyridoxal 5'-phosphate. Residues Lys-109, Tyr-132, and Asn-187 each coordinate substrate. Position 249 is an N6-(pyridoxal phosphate)lysine (Lys-249). Pyridoxal 5'-phosphate-binding residues include Arg-257 and Asn-292. Positions 292 and 388 each coordinate substrate.

It belongs to the class-I pyridoxal-phosphate-dependent aminotransferase family. LL-diaminopimelate aminotransferase subfamily. Homodimer. It depends on pyridoxal 5'-phosphate as a cofactor.

It carries out the reaction (2S,6S)-2,6-diaminopimelate + 2-oxoglutarate = (S)-2,3,4,5-tetrahydrodipicolinate + L-glutamate + H2O + H(+). It participates in amino-acid biosynthesis; L-lysine biosynthesis via DAP pathway; LL-2,6-diaminopimelate from (S)-tetrahydrodipicolinate (aminotransferase route): step 1/1. Functionally, involved in the synthesis of meso-diaminopimelate (m-DAP or DL-DAP), required for both lysine and peptidoglycan biosynthesis. Catalyzes the direct conversion of tetrahydrodipicolinate to LL-diaminopimelate. This is LL-diaminopimelate aminotransferase from Synechocystis sp. (strain ATCC 27184 / PCC 6803 / Kazusa).